Here is a 412-residue protein sequence, read N- to C-terminus: 4-hydroxy-3-methylbut-2-en-1-yl diphosphate synthase (ferredoxin) (412 aa).

Over residues 1-12 (MQTLDRPNAPSQ) the composition is skewed to polar residues. The disordered stretch occupies residues 1–22 (MQTLDRPNAPSQQPYPEPVYPR). The [4Fe-4S] cluster site is built by C314, C317, C348, and E355.

It belongs to the IspG family. Requires [4Fe-4S] cluster as cofactor.

It catalyses the reaction (2E)-4-hydroxy-3-methylbut-2-enyl diphosphate + 2 oxidized [2Fe-2S]-[ferredoxin] + H2O = 2-C-methyl-D-erythritol 2,4-cyclic diphosphate + 2 reduced [2Fe-2S]-[ferredoxin] + H(+). Its pathway is isoprenoid biosynthesis; isopentenyl diphosphate biosynthesis via DXP pathway; isopentenyl diphosphate from 1-deoxy-D-xylulose 5-phosphate: step 5/6. Its function is as follows. Converts 2C-methyl-D-erythritol 2,4-cyclodiphosphate (ME-2,4cPP) into 1-hydroxy-2-methyl-2-(E)-butenyl 4-diphosphate. The protein is 4-hydroxy-3-methylbut-2-en-1-yl diphosphate synthase (ferredoxin) of Synechococcus sp. (strain JA-3-3Ab) (Cyanobacteria bacterium Yellowstone A-Prime).